Here is a 462-residue protein sequence, read N- to C-terminus: Glycine--tRNA ligase (462 aa).

Residues R100 and E174 each coordinate substrate. ATP contacts are provided by residues 206–208, 216–221, 290–291, and 334–337; these read RNE, FRTREF, EL, and GADR. Position 221–225 (221–225) interacts with substrate; the sequence is FEQME. Residue 330 to 334 participates in substrate binding; it reads EPSLG.

This sequence belongs to the class-II aminoacyl-tRNA synthetase family. As to quaternary structure, homodimer.

The protein localises to the cytoplasm. It carries out the reaction tRNA(Gly) + glycine + ATP = glycyl-tRNA(Gly) + AMP + diphosphate. Functionally, catalyzes the attachment of glycine to tRNA(Gly). The sequence is that of Glycine--tRNA ligase from Ruminiclostridium cellulolyticum (strain ATCC 35319 / DSM 5812 / JCM 6584 / H10) (Clostridium cellulolyticum).